We begin with the raw amino-acid sequence, 511 residues long: Phospho-2-dehydro-3-deoxyheptonate aldolase 1, chloroplastic (511 aa).

The N-terminal 49 residues, 1–49 (MALSNTLSLSSSKSLVQSHLLHNPTPQPRFSLFPTTQHGRRHPISAVHA), are a transit peptide targeting the chloroplast.

The protein belongs to the class-II DAHP synthase family. Higher levels seen in the cotyledons than in the leaves and flowers. Lower levels seen in the roots and stems.

The protein resides in the plastid. It is found in the chloroplast. It catalyses the reaction D-erythrose 4-phosphate + phosphoenolpyruvate + H2O = 7-phospho-2-dehydro-3-deoxy-D-arabino-heptonate + phosphate. It functions in the pathway metabolic intermediate biosynthesis; chorismate biosynthesis; chorismate from D-erythrose 4-phosphate and phosphoenolpyruvate: step 1/7. May be involved in the synthesis of secondary metabolites derived from intermediates of the pre-chorismate pathway up to shikimate. This Solanum lycopersicum (Tomato) protein is Phospho-2-dehydro-3-deoxyheptonate aldolase 1, chloroplastic.